The primary structure comprises 257 residues: DNA repair protein RecO (257 aa).

This sequence belongs to the RecO family.

Its function is as follows. Involved in DNA repair and RecF pathway recombination. The polypeptide is DNA repair protein RecO (Clostridium kluyveri (strain ATCC 8527 / DSM 555 / NBRC 12016 / NCIMB 10680 / K1)).